Here is a 1012-residue protein sequence, read N- to C-terminus: Vacuolar membrane protease (1012 aa).

At 1-60 (MRRSTDPRNLLVRRGPLLVDGESAISELDPGFFPTGDAPKMSSTTRRRFNLIAFTPGPVT) the chain is on the cytoplasmic side. Residues 61–81 (VISSLVYLALLIPLLLVHTIV) form a helical membrane-spanning segment. At 82-432 (PSAPKSNPKG…SFAVFRLHTL (351 aa)) the chain is on the vacuolar side. The N-linked (GlcNAc...) asparagine glycan is linked to asparagine 159. Positions 215 and 227 each coordinate Zn(2+). The active-site Proton acceptor is glutamate 261. Residues glutamate 262, glutamate 287, and histidine 360 each contribute to the Zn(2+) site. A helical transmembrane segment spans residues 433-453 (FAISVTLLVVCPIVLFVIGII). Over 454–487 (LSKMDKMYLFSIHETIPETKEKVSVRGLRGLFRY) the chain is Cytoplasmic. The chain crosses the membrane as a helical span at residues 488 to 508 (PIILVVSSGILIGLSYLLAKV). At 509–518 (NPFIVHSSSY) the chain is on the vacuolar side. The helical transmembrane segment at 519–539 (AVWSMMLSSWIFMTWFLSCIA) threads the bilayer. The Cytoplasmic portion of the chain corresponds to 540-550 (DFFRPSALHRA). Residues 551–571 (YTFTWQLLVMWVLLVISTVYV) form a helical membrane-spanning segment. Residues 572–575 (NQHD) are Vacuolar-facing. Residues 576–596 (IAAGYFIVFYFAGTFLATLIS) form a helical membrane-spanning segment. Residues 597-710 (YLELFALPNK…WSASLPTWTW (114 aa)) are Cytoplasmic-facing. Residues 614–629 (SQYPSRLGSNRSSRIL) are compositionally biased toward polar residues. A disordered region spans residues 614 to 660 (SQYPSRLGSNRSSRILSPSADELPTGGDNNGEIYDGEEEPTESSSLL). A helical transmembrane segment spans residues 711–731 (VLQFLFVGPVVIMFIGQLGLF). Topologically, residues 732 to 743 (LTSAMNQVGADG) are vacuolar. A helical transmembrane segment spans residues 744 to 764 (VGLLVVYIAIAVFSVLLLIPL). Topologically, residues 765–777 (SPFIHRFTYHVPT) are cytoplasmic. A helical transmembrane segment spans residues 778–798 (FLLLVFIATLIYNLAAFPFSA). At 799 to 1012 (ENRLKIFFVQ…DGLVEVSRGF (214 aa)) the chain is on the vacuolar side. N-linked (GlcNAc...) asparagine glycosylation is found at asparagine 842 and asparagine 878.

Belongs to the peptidase M28 family. It depends on Zn(2+) as a cofactor.

The protein resides in the vacuole membrane. In terms of biological role, may be involved in vacuolar sorting and osmoregulation. The polypeptide is Vacuolar membrane protease (Coccidioides posadasii (strain RMSCC 757 / Silveira) (Valley fever fungus)).